Here is a 165-residue protein sequence, read N- to C-terminus: Nucleotide-binding protein P9211_04811 (165 aa).

This sequence belongs to the YajQ family.

In terms of biological role, nucleotide-binding protein. The sequence is that of Nucleotide-binding protein P9211_04811 from Prochlorococcus marinus (strain MIT 9211).